The chain runs to 455 residues: Hydroxymethylglutaryl-CoA synthase 2 (455 aa).

The active-site Proton donor/acceptor is the E86. The active-site Acyl-thioester intermediate is C120. Positions 120, 161, 211, 255, 264, 329, and 363 each coordinate (3S)-3-hydroxy-3-methylglutaryl-CoA. The active-site Proton donor/acceptor is H255.

Belongs to the thiolase-like superfamily. HMG-CoA synthase family.

The catalysed reaction is acetoacetyl-CoA + acetyl-CoA + H2O = (3S)-3-hydroxy-3-methylglutaryl-CoA + CoA + H(+). It functions in the pathway metabolic intermediate biosynthesis; (R)-mevalonate biosynthesis; (R)-mevalonate from acetyl-CoA: step 2/3. Functionally, this enzyme condenses acetyl-CoA with acetoacetyl-CoA to form HMG-CoA, which is the substrate for HMG-CoA reductase. The protein is Hydroxymethylglutaryl-CoA synthase 2 (HMGCS-2) of Blattella germanica (German cockroach).